Consider the following 151-residue polypeptide: Meiotically up-regulated gene 114 protein (151 aa).

It is found in the cytoplasm. Its function is as follows. Has a role in meiosis. The chain is Meiotically up-regulated gene 114 protein (mug114) from Schizosaccharomyces pombe (strain 972 / ATCC 24843) (Fission yeast).